The following is a 481-amino-acid chain: Threonine synthase (481 aa).

Lysine 118 carries the N6-(pyridoxal phosphate)lysine modification.

Belongs to the threonine synthase family. As to quaternary structure, monomer. Pyridoxal 5'-phosphate is required as a cofactor.

It catalyses the reaction O-phospho-L-homoserine + H2O = L-threonine + phosphate. It functions in the pathway amino-acid biosynthesis; L-threonine biosynthesis; L-threonine from L-aspartate: step 5/5. Functionally, catalyzes the gamma-elimination of phosphate from L-phosphohomoserine and the beta-addition of water to produce L-threonine. This chain is Threonine synthase (thrC), found in Corynebacterium glutamicum (strain ATCC 13032 / DSM 20300 / JCM 1318 / BCRC 11384 / CCUG 27702 / LMG 3730 / NBRC 12168 / NCIMB 10025 / NRRL B-2784 / 534).